Consider the following 702-residue polypeptide: Phosphoglycerol transferase I (702 aa).

Transmembrane regions (helical) follow at residues 2–22 (HWML…SPRL), 71–91 (FSGY…PLLL), and 103–123 (GGAV…ASPL).

It belongs to the OpgB family.

The protein resides in the cell inner membrane. The catalysed reaction is a phosphatidylglycerol + a membrane-derived-oligosaccharide D-glucose = a 1,2-diacyl-sn-glycerol + a membrane-derived-oligosaccharide 6-(glycerophospho)-D-glucose.. The protein operates within glycan metabolism; osmoregulated periplasmic glucan (OPG) biosynthesis. Transfers a phosphoglycerol residue from phosphatidylglycerol to the membrane-bound nascent glucan backbones. The sequence is that of Phosphoglycerol transferase I from Xanthomonas euvesicatoria pv. vesicatoria (strain 85-10) (Xanthomonas campestris pv. vesicatoria).